A 160-amino-acid chain; its full sequence is Large ribosomal subunit protein uL18 (160 aa).

Belongs to the universal ribosomal protein uL18 family. As to quaternary structure, part of the 50S ribosomal subunit. Contacts the 5S and 23S rRNAs.

In terms of biological role, this is one of the proteins that bind and probably mediate the attachment of the 5S RNA into the large ribosomal subunit, where it forms part of the central protuberance. In Thermoplasma volcanium (strain ATCC 51530 / DSM 4299 / JCM 9571 / NBRC 15438 / GSS1), this protein is Large ribosomal subunit protein uL18.